A 343-amino-acid chain; its full sequence is Dual-specificity RNA methyltransferase RlmN (343 aa).

Glu-92 (proton acceptor) is an active-site residue. Residues Asp-98–Asp-325 form the Radical SAM core domain. A disulfide bridge connects residues Cys-105 and Cys-330. 3 residues coordinate [4Fe-4S] cluster: Cys-112, Cys-116, and Cys-119. Residues Gly-157–Glu-158, Ser-189, Ser-211–Asn-213, and Asn-287 each bind S-adenosyl-L-methionine. Residue Cys-330 is the S-methylcysteine intermediate of the active site.

Belongs to the radical SAM superfamily. RlmN family. The cofactor is [4Fe-4S] cluster.

It localises to the cytoplasm. It carries out the reaction adenosine(2503) in 23S rRNA + 2 reduced [2Fe-2S]-[ferredoxin] + 2 S-adenosyl-L-methionine = 2-methyladenosine(2503) in 23S rRNA + 5'-deoxyadenosine + L-methionine + 2 oxidized [2Fe-2S]-[ferredoxin] + S-adenosyl-L-homocysteine. The enzyme catalyses adenosine(37) in tRNA + 2 reduced [2Fe-2S]-[ferredoxin] + 2 S-adenosyl-L-methionine = 2-methyladenosine(37) in tRNA + 5'-deoxyadenosine + L-methionine + 2 oxidized [2Fe-2S]-[ferredoxin] + S-adenosyl-L-homocysteine. Functionally, specifically methylates position 2 of adenine 2503 in 23S rRNA and position 2 of adenine 37 in tRNAs. m2A2503 modification seems to play a crucial role in the proofreading step occurring at the peptidyl transferase center and thus would serve to optimize ribosomal fidelity. The protein is Dual-specificity RNA methyltransferase RlmN of Geotalea uraniireducens (strain Rf4) (Geobacter uraniireducens).